The primary structure comprises 297 residues: tRNA dimethylallyltransferase (297 aa).

15-22 (GPTASGKS) provides a ligand contact to ATP. 17 to 22 (TASGKS) serves as a coordination point for substrate. Interaction with substrate tRNA stretches follow at residues 40 to 43 (DSMQ) and 164 to 168 (QRIVR).

It belongs to the IPP transferase family. In terms of assembly, monomer. The cofactor is Mg(2+).

The catalysed reaction is adenosine(37) in tRNA + dimethylallyl diphosphate = N(6)-dimethylallyladenosine(37) in tRNA + diphosphate. Its function is as follows. Catalyzes the transfer of a dimethylallyl group onto the adenine at position 37 in tRNAs that read codons beginning with uridine, leading to the formation of N6-(dimethylallyl)adenosine (i(6)A). The chain is tRNA dimethylallyltransferase from Rhizobium etli (strain CIAT 652).